The primary structure comprises 313 residues: Probable myosin light chain kinase DDB_G0292624 (313 aa).

The Protein kinase domain occupies 6–264; that stretch reads YELHKEIGKG…AKQALEHPWI (259 aa). ATP contacts are provided by residues 12 to 20 and lysine 35; that span reads IGKGAFSVV. The Proton acceptor role is filled by aspartate 125.

The protein belongs to the protein kinase superfamily. CAMK Ser/Thr protein kinase family. CaMK subfamily.

It carries out the reaction L-seryl-[myosin light chain] + ATP = O-phospho-L-seryl-[myosin light chain] + ADP + H(+). The catalysed reaction is L-threonyl-[myosin light chain] + ATP = O-phospho-L-threonyl-[myosin light chain] + ADP + H(+). Does not have a calmodulin-binding domain. In terms of biological role, may phosphorylate a specific serine in the N-terminus of a myosin light chain. In Dictyostelium discoideum (Social amoeba), this protein is Probable myosin light chain kinase DDB_G0292624.